The primary structure comprises 258 residues: Mediator of RNA polymerase II transcription subunit 7 (258 aa).

Disordered stretches follow at residues 1 to 39 and 202 to 243; these read MLPG…PPPH and EKET…PPSV. Residues 203 to 217 are compositionally biased toward acidic residues; it reads KETEEDEEMKEDDEE. Over residues 220 to 229 the composition is skewed to polar residues; the sequence is STSSSEGNQK.

Belongs to the Mediator complex subunit 7 family. Component of the Mediator complex.

The protein localises to the nucleus. Component of the Mediator complex, a coactivator involved in the regulated transcription of nearly all RNA polymerase II-dependent genes. Mediator functions as a bridge to convey information from gene-specific regulatory proteins to the basal RNA polymerase II transcription machinery. Mediator is recruited to promoters by direct interactions with regulatory proteins and serves as a scaffold for the assembly of a functional preinitiation complex with RNA polymerase II and the general transcription factors. The polypeptide is Mediator of RNA polymerase II transcription subunit 7 (let-49) (Caenorhabditis briggsae).